We begin with the raw amino-acid sequence, 178 residues long: Enhancer of split m5 protein (178 aa).

In terms of domain architecture, bHLH spans 18–73 (YLKVKKPLLERQRRARMNKCLDTLKTLVAEFQGDDAILRMDKAEMLEAALVFMRKQ). Residues 89 to 122 (FKNGYMNAVSEISRVMACTPAMSVDVGKTVMTHL) form the Orange domain. A compositionally biased stretch (polar residues) spans 135–165 (VQTSVTTSTPRPLSPASSGYHSDNEDSQSAA). The disordered stretch occupies residues 135 to 178 (VQTSVTTSTPRPLSPASSGYHSDNEDSQSAASPKPVEETMWRPW). The segment covering 169 to 178 (PVEETMWRPW) has biased composition (basic and acidic residues). The short motif at 175–178 (WRPW) is the WRPW motif element.

Transcription repression requires formation of a complex with a corepressor protein (Groucho). Forms homodimers.

Its subcellular location is the nucleus. Participates in the control of cell fate choice by uncommitted neuroectodermal cells in the embryo. Transcriptional repressor. Binds DNA on N-box motifs: 5'-CACNAG-3'. This is Enhancer of split m5 protein from Drosophila melanogaster (Fruit fly).